The chain runs to 308 residues: Probable manganese-dependent inorganic pyrophosphatase (308 aa).

Positions 9, 13, 15, 75, 97, and 149 each coordinate Mn(2+).

Belongs to the PPase class C family. Mn(2+) serves as cofactor.

Its subcellular location is the cytoplasm. It catalyses the reaction diphosphate + H2O = 2 phosphate + H(+). This chain is Probable manganese-dependent inorganic pyrophosphatase, found in Listeria monocytogenes serotype 4a (strain HCC23).